The following is a 414-amino-acid chain: Carboxyl-terminal-processing protease (414 aa).

Positions 1 to 29 (MLRKRLQAGLCSLLLVLVLVFGPMERAIA) are cleaved as a signal peptide. One can recognise a PDZ domain in the interval 100–184 (YRSLKVSTSG…STVSLTVKSP (85 aa)). Catalysis depends on charge relay system residues Ser-310, Asp-321, and Lys-335.

It belongs to the peptidase S41A family.

It is found in the cellular thylakoid lumen. The catalysed reaction is The enzyme shows specific recognition of a C-terminal tripeptide, Xaa-Yaa-Zaa, in which Xaa is preferably Ala or Leu, Yaa is preferably Ala or Tyr, and Zaa is preferably Ala, but then cleaves at a variable distance from the C-terminus. A typical cleavage is -Ala-Ala-|-Arg-Ala-Ala-Lys-Glu-Asn-Tyr-Ala-Leu-Ala-Ala.. Cleavage of the 16 C-terminal residues from the D1 precursor of photosystem II (PSII). This proteolytic processing is necessary to allow the light-driven assembly of the oxygen-evolving cluster (a tetranuclear manganese), which is responsible for photosynthetic water oxidation. This Picosynechococcus sp. (strain ATCC 27264 / PCC 7002 / PR-6) (Agmenellum quadruplicatum) protein is Carboxyl-terminal-processing protease (ctpA).